The sequence spans 342 residues: Ribosomal RNA small subunit methyltransferase C (342 aa).

It belongs to the methyltransferase superfamily. RsmC family. In terms of assembly, monomer.

It is found in the cytoplasm. The enzyme catalyses guanosine(1207) in 16S rRNA + S-adenosyl-L-methionine = N(2)-methylguanosine(1207) in 16S rRNA + S-adenosyl-L-homocysteine + H(+). Functionally, specifically methylates the guanine in position 1207 of 16S rRNA in the 30S particle. The chain is Ribosomal RNA small subunit methyltransferase C from Salmonella gallinarum (strain 287/91 / NCTC 13346).